Consider the following 1179-residue polypeptide: ATP-dependent helicase/deoxyribonuclease subunit B (1179 aa).

It belongs to the helicase family. AddB/RexB type 2 subfamily. In terms of assembly, heterodimer of AddA and RexB. It depends on Mg(2+) as a cofactor.

The heterodimer acts as both an ATP-dependent DNA helicase and an ATP-dependent, dual-direction single-stranded exonuclease. Recognizes the chi site generating a DNA molecule suitable for the initiation of homologous recombination. This subunit has 5' -&gt; 3' nuclease activity but not helicase activity. This Lactobacillus delbrueckii subsp. bulgaricus (strain ATCC BAA-365 / Lb-18) protein is ATP-dependent helicase/deoxyribonuclease subunit B.